A 403-amino-acid chain; its full sequence is 1-deoxy-D-xylulose 5-phosphate reductoisomerase (403 aa).

NADPH contacts are provided by Thr18, Gly19, Ser20, Ile21, Gln46, and Asn132. 1-deoxy-D-xylulose 5-phosphate is bound at residue Lys133. Glu134 is an NADPH binding site. Mn(2+) is bound at residue Asp158. 1-deoxy-D-xylulose 5-phosphate is bound by residues Ser159, Glu160, Ser189, and His212. Glu160 is a binding site for Mn(2+). Position 218 (Gly218) interacts with NADPH. 1-deoxy-D-xylulose 5-phosphate contacts are provided by Ser225, Asn230, Lys231, and Glu234. Glu234 is a Mn(2+) binding site.

The protein belongs to the DXR family. It depends on Mg(2+) as a cofactor. The cofactor is Mn(2+).

The catalysed reaction is 2-C-methyl-D-erythritol 4-phosphate + NADP(+) = 1-deoxy-D-xylulose 5-phosphate + NADPH + H(+). The protein operates within isoprenoid biosynthesis; isopentenyl diphosphate biosynthesis via DXP pathway; isopentenyl diphosphate from 1-deoxy-D-xylulose 5-phosphate: step 1/6. In terms of biological role, catalyzes the NADPH-dependent rearrangement and reduction of 1-deoxy-D-xylulose-5-phosphate (DXP) to 2-C-methyl-D-erythritol 4-phosphate (MEP). This is 1-deoxy-D-xylulose 5-phosphate reductoisomerase from Aromatoleum aromaticum (strain DSM 19018 / LMG 30748 / EbN1) (Azoarcus sp. (strain EbN1)).